The following is a 201-amino-acid chain: Ras-related protein Ral-a (201 aa).

Residue 18–25 (GSGGVGKS) participates in GTP binding. Positions 40–48 (YEPTKADSY) match the Effector region motif. Residues 65-69 (DTAGQ) and 124-127 (NKCD) each bind GTP. Cysteine 198 is subject to Cysteine methyl ester. Cysteine 198 carries S-geranylgeranyl cysteine lipidation. The propeptide at 199–201 (TLL) is removed in mature form.

This sequence belongs to the small GTPase superfamily. Ras family.

The protein resides in the cell membrane. It localises to the cleavage furrow. Its subcellular location is the midbody. It is found in the midbody ring. The enzyme catalyses GTP + H2O = GDP + phosphate + H(+). The chain is Ras-related protein Ral-a (Rala) from Drosophila melanogaster (Fruit fly).